The following is a 142-amino-acid chain: Putative phosphatidylglycerol/phosphatidylinositol transfer protein 2 (142 aa).

The first 20 residues, 1 to 20, serve as a signal peptide directing secretion; sequence MKFYLYLSILLILLTSTSFG.

Belongs to the NPC2 family. Monomer.

Functionally, catalyzes the intermembrane transfer of phosphatidylglycerol and phosphatidylinositol. In Dictyostelium discoideum (Social amoeba), this protein is Putative phosphatidylglycerol/phosphatidylinositol transfer protein 2.